Here is a 180-residue protein sequence, read N- to C-terminus: ATP-dependent protease subunit HslV (180 aa).

The active site involves T7. Residues G163, C166, and T169 each contribute to the Na(+) site.

It belongs to the peptidase T1B family. HslV subfamily. As to quaternary structure, a double ring-shaped homohexamer of HslV is capped on each side by a ring-shaped HslU homohexamer. The assembly of the HslU/HslV complex is dependent on binding of ATP.

The protein localises to the cytoplasm. It catalyses the reaction ATP-dependent cleavage of peptide bonds with broad specificity.. With respect to regulation, allosterically activated by HslU binding. Its function is as follows. Protease subunit of a proteasome-like degradation complex believed to be a general protein degrading machinery. The protein is ATP-dependent protease subunit HslV of Alcanivorax borkumensis (strain ATCC 700651 / DSM 11573 / NCIMB 13689 / SK2).